The sequence spans 440 residues: Aclacinomycin-T 2-deoxy-L-fucose transferase (440 aa).

The catalysed reaction is dTDP-2-deoxy-beta-L-fucose + aclacinomycin T = aclacinomycin S + dTDP + H(+). Its function is as follows. Involved in the biosynthesis of the trisaccharide moiety characteristic of the antitumor drug aclacinomycins. In the first reaction, AknK catalyzes the transfer of 2-deoxy-beta-L-fucose from the activated donor dTDP-2-deoxy-beta-L-fucose to the mono-glycosylated aclacinomycin T (rhodosaminyl aklavinone), forming the di-glycosylated aclacinomycin S (L-2-deoxyfucosyl-L-rhodosaminyl aklavinone). It can also catalyze the addition of an alternate dTDP-L-sugar, dTDP-L-daunosamine, to aclacinomycin T and the addition of 2-deoxy-beta-L-fucose to the mono-glycosylated aglycones (monoglycosylated anthracyclines) such as daunomycin (daunorubicin), adriamycin (doxorubicin) and idarubicin. In vitro, AknK also catalyzes the addition of a second L-2-deoxyfucosyl moiety from dTDP-2-deoxy-beta-L-fucose, albeit with reduced activity, to the natural disaccharide chain of aclacinomycin S to produce L-deoxyfucosyl-L-deoxyfucosyl-L-rhodosaminyl aklavinone (2-deoxy-alpha-D-fucosyl-aclacinomycin S), a variant of the natural aclacinomycin A. The protein is Aclacinomycin-T 2-deoxy-L-fucose transferase of Streptomyces galilaeus.